Here is a 122-residue protein sequence, read N- to C-terminus: Large ribosomal subunit protein uL14 (122 aa).

It belongs to the universal ribosomal protein uL14 family. As to quaternary structure, part of the 50S ribosomal subunit. Forms a cluster with proteins L3 and L19. In the 70S ribosome, L14 and L19 interact and together make contacts with the 16S rRNA in bridges B5 and B8. Can interact with ribosomal silencing factor RsfS, which may inhibit ribosomal subunit association.

Its function is as follows. Binds to 23S rRNA. Forms part of two intersubunit bridges in the 70S ribosome. In Synechocystis sp. (strain ATCC 27184 / PCC 6803 / Kazusa), this protein is Large ribosomal subunit protein uL14.